Here is a 241-residue protein sequence, read N- to C-terminus: Demethylmenaquinone methyltransferase (241 aa).

Residues T60, D81, and 106 to 107 (DA) each bind S-adenosyl-L-methionine.

Belongs to the class I-like SAM-binding methyltransferase superfamily. MenG/UbiE family.

The enzyme catalyses a 2-demethylmenaquinol + S-adenosyl-L-methionine = a menaquinol + S-adenosyl-L-homocysteine + H(+). The protein operates within quinol/quinone metabolism; menaquinone biosynthesis; menaquinol from 1,4-dihydroxy-2-naphthoate: step 2/2. Methyltransferase required for the conversion of demethylmenaquinol (DMKH2) to menaquinol (MKH2). The chain is Demethylmenaquinone methyltransferase from Staphylococcus aureus (strain Mu3 / ATCC 700698).